Reading from the N-terminus, the 274-residue chain is Cytochrome b-c1 complex subunit Rieske, mitochondrial (274 aa).

Over 79–103 the chain is Mitochondrial matrix; sequence SHTDVKVPDFCDYRRPEVLDSTKSS. The chain crosses the membrane as a helical span at residues 104 to 140; that stretch reads RESSEARKSFSYMVTAVTTVGVAYAAKNAVTQFVSSM. Over 141-274 the chain is Mitochondrial intermembrane; that stretch reads SASADVLAMA…FTSDDMVVVG (134 aa). Residues 187 to 272 enclose the Rieske domain; the sequence is EAAVELSQLR…YEFTSDDMVV (86 aa). Positions 217, 219, 236, 239, and 241 each coordinate [2Fe-2S] cluster. An intrachain disulfide couples cysteine 222 to cysteine 238.

The protein belongs to the Rieske iron-sulfur protein family. As to quaternary structure, component of the ubiquinol-cytochrome c oxidoreductase (cytochrome b-c1 complex, complex III, CIII), a multisubunit enzyme composed of 11 subunits. The complex is composed of 3 respiratory subunits cytochrome b, cytochrome c1 and Rieske protein UQCRFS1, 2 core protein subunits UQCRC1/QCR1 and UQCRC2/QCR2, and 6 low-molecular weight protein subunits UQCRH/QCR6, UQCRB/QCR7, UQCRQ/QCR8, UQCR10/QCR9, UQCR11/QCR10 and subunit 9, the cleavage product of Rieske protein UQCRFS1. The complex exists as an obligatory dimer and forms supercomplexes (SCs) in the inner mitochondrial membrane with NADH-ubiquinone oxidoreductase (complex I, CI) and cytochrome c oxidase (complex IV, CIV), resulting in different assemblies (supercomplex SCI(1)III(2)IV(1) and megacomplex MCI(2)III(2)IV(2)). Incorporation of the Rieske protein UQCRFS1 is the penultimate step in complex III assembly. Interacts with TTC19, which is involved in the clearance of UQCRFS1 fragments. Component of the ubiquinol-cytochrome c oxidoreductase (cytochrome b-c1 complex, complex III, CIII). Subunit 9 corresponds to the mitochondrial targeting sequence (MTS) of Rieske protein UQCRFS1. It is retained after processing and incorporated inside complex III, where it remains bound to the complex and localizes between the 2 core subunits UQCRC1/QCR1 and UQCRC2/QCR2. It depends on [2Fe-2S] cluster as a cofactor. Proteolytic processing is necessary for the correct insertion of UQCRFS1 in the complex III dimer. Several fragments are generated during UQCRFS1 insertion, most probably due to the endogenous matrix-processing peptidase (MPP) activity of the 2 core protein subunits UQCRC1/QCR1 and UQCRC2/QCR2, which are homologous to the 2 mitochondrial-processing peptidase (MPP) subunits beta-MPP and alpha-MPP respectively. The action of the protease is also necessary for the clearance of the UQCRFS1 fragments.

It localises to the mitochondrion inner membrane. It carries out the reaction a quinol + 2 Fe(III)-[cytochrome c](out) = a quinone + 2 Fe(II)-[cytochrome c](out) + 2 H(+)(out). Its function is as follows. Component of the ubiquinol-cytochrome c oxidoreductase, a multisubunit transmembrane complex that is part of the mitochondrial electron transport chain which drives oxidative phosphorylation. The respiratory chain contains 3 multisubunit complexes succinate dehydrogenase (complex II, CII), ubiquinol-cytochrome c oxidoreductase (cytochrome b-c1 complex, complex III, CIII) and cytochrome c oxidase (complex IV, CIV), that cooperate to transfer electrons derived from NADH and succinate to molecular oxygen, creating an electrochemical gradient over the inner membrane that drives transmembrane transport and the ATP synthase. The cytochrome b-c1 complex catalyzes electron transfer from ubiquinol to cytochrome c, linking this redox reaction to translocation of protons across the mitochondrial inner membrane, with protons being carried across the membrane as hydrogens on the quinol. In the process called Q cycle, 2 protons are consumed from the matrix, 4 protons are released into the intermembrane space and 2 electrons are passed to cytochrome c. The Rieske protein is a catalytic core subunit containing a [2Fe-2S] iron-sulfur cluster. It cycles between 2 conformational states during catalysis to transfer electrons from the quinol bound in the Q(0) site in cytochrome b to cytochrome c1. Incorporation of UQCRFS1 is the penultimate step in complex III assembly. Functionally, component of the ubiquinol-cytochrome c oxidoreductase (cytochrome b-c1 complex, complex III, CIII). UQCRFS1 undergoes proteolytic processing once it is incorporated in the complex III dimer. One of the fragments, called subunit 9, corresponds to its mitochondrial targeting sequence (MTS). The proteolytic processing is necessary for the correct insertion of UQCRFS1 in the complex III dimer, but the persistence of UQCRFS1-derived fragments may prevent newly imported UQCRFS1 to be processed and assembled into complex III and is detrimental for the complex III structure and function. In Colobus polykomos (Western black-and-white colobus monkey), this protein is Cytochrome b-c1 complex subunit Rieske, mitochondrial (UQCRFS1).